The following is a 259-amino-acid chain: Diphthine synthase (259 aa).

S-adenosyl-L-methionine-binding positions include L9, D85, V88, 113 to 114 (TA), L168, A209, and H234.

Belongs to the diphthine synthase family. As to quaternary structure, homodimer.

It catalyses the reaction 2-[(3S)-amino-3-carboxypropyl]-L-histidyl-[translation elongation factor 2] + 3 S-adenosyl-L-methionine = diphthine-[translation elongation factor 2] + 3 S-adenosyl-L-homocysteine + 3 H(+). Its pathway is protein modification; peptidyl-diphthamide biosynthesis. Functionally, S-adenosyl-L-methionine-dependent methyltransferase that catalyzes the trimethylation of the amino group of the modified target histidine residue in translation elongation factor 2 (EF-2), to form an intermediate called diphthine. The three successive methylation reactions represent the second step of diphthamide biosynthesis. The protein is Diphthine synthase of Haloarcula marismortui (strain ATCC 43049 / DSM 3752 / JCM 8966 / VKM B-1809) (Halobacterium marismortui).